The sequence spans 149 residues: Large ribosomal subunit protein bL9 (149 aa).

The protein belongs to the bacterial ribosomal protein bL9 family.

Functionally, binds to the 23S rRNA. This is Large ribosomal subunit protein bL9 from Campylobacter curvus (strain 525.92).